Consider the following 985-residue polypeptide: Ephrin type-A receptor 4-B (985 aa).

Positions 1–20 are cleaved as a signal peptide; it reads MAGIVHGILFCGLFGLCWAV. Residues 21–547 are Extracellular-facing; that stretch reads TGSRIYPASE…MIGEGTSPTV (527 aa). Positions 30–209 constitute an Eph LBD domain; it reads EVTLLDSRSV…FYKKCPLTVR (180 aa). Fibronectin type-III domains follow at residues 328 to 438 and 439 to 536; these read PPSA…TNQA and APST…TVPS. 2 N-linked (GlcNAc...) asparagine glycosylation sites follow: N340 and N407. Residues 548–569 form a helical membrane-spanning segment; it reads LLVSVAGSIVLVVILIAAFVIS. Residues 570–985 are Cytoplasmic-facing; sequence RRRSKYSKAK…QQMQGRMVPV (416 aa). 2 positions are modified to phosphotyrosine; by autocatalysis: Y595 and Y601. One can recognise a Protein kinase domain in the interval 620 to 881; the sequence is IKIEKVIGVG…QIVSMLDKLI (262 aa). Residues 626-634 and K652 each bind ATP; that span reads IGVGEFGEV. D745 functions as the Proton acceptor in the catalytic mechanism. 2 positions are modified to phosphotyrosine; by autocatalysis: Y778 and Y927. The SAM domain maps to 910–974; it reads SQVASVLDWL…LSSVQGMRTQ (65 aa). A PDZ-binding motif is present at residues 983 to 985; sequence VPV.

Belongs to the protein kinase superfamily. Tyr protein kinase family. Ephrin receptor subfamily. As to expression, localized expression in a subset of neural crest and neural tissues in embryos.

Its subcellular location is the cell membrane. The protein localises to the early endosome. The catalysed reaction is L-tyrosyl-[protein] + ATP = O-phospho-L-tyrosyl-[protein] + ADP + H(+). Its function is as follows. Receptor tyrosine kinase which binds membrane-bound ephrin family ligands residing on adjacent cells, leading to contact-dependent bidirectional signaling into neighboring cells. The signaling pathway downstream of the receptor is referred to as forward signaling while the signaling pathway downstream of the ephrin ligand is referred to as reverse signaling. Highly promiscuous, it has the unique property among Eph receptors to bind and to be physiologically activated by both GPI-anchored ephrin-A and transmembrane ephrin-B ligands including EFNA1 and EFNB3. Upon activation by ephrin ligands, modulates cell morphology and integrin-dependent cell adhesion through regulation of the Rac, Rap and Rho GTPases activity. Plays an important role in the development of the nervous system controlling different steps of axonal guidance including the establishment of the corticospinal projections. This is Ephrin type-A receptor 4-B (epha4-b) from Xenopus laevis (African clawed frog).